A 285-amino-acid polypeptide reads, in one-letter code: NADH-cytochrome b5 reductase 1 (285 aa).

A helical membrane pass occupies residues 7-23 (LATFSVLVLFYKLFTYS). Positions 40 to 144 (TEFREFELVE…SGPRGFYEYV (105 aa)) constitute an FAD-binding FR-type domain. FAD contacts are provided by residues 124–139 (GDMKIGEKINISGPRG) and 150–182 (HLAMVAGGTGITPMFQIMKAIARDPSDKTRVTL).

Belongs to the flavoprotein pyridine nucleotide cytochrome reductase family. As to quaternary structure, monomer. Component of the 2-(3-amino-3-carboxypropyl)histidine synthase complex composed of DPH1, DPH2, DPH3 and a NADH-dependent reductase, predominantly CBR1. FAD serves as cofactor.

Its subcellular location is the mitochondrion outer membrane. It carries out the reaction 2 Fe(III)-[cytochrome b5] + NADH = 2 Fe(II)-[cytochrome b5] + NAD(+) + H(+). The enzyme catalyses 2 Fe(3+)-[Dph3] + NADH = 2 Fe(2+)-[Dph3] + NAD(+) + H(+). It functions in the pathway protein modification; peptidyl-diphthamide biosynthesis. Its function is as follows. NADH-dependent reductase for DPH3 and cytochrome b5. Required for the first step of diphthamide biosynthesis, a post-translational modification of histidine which occurs in elongation factor 2. DPH1 and DPH2 transfer a 3-amino-3-carboxypropyl (ACP) group from S-adenosyl-L-methionine (SAM) to a histidine residue, the reaction is assisted by a reduction system comprising DPH3 and a NADH-dependent reductase, predominantly CBR1. By reducing DPH3, also involved in the formation of the tRNA wobble base modification mcm5s 2U (5-methoxycarbonylmethyl-2-thiouridine), mediated by the elongator complex. The cytochrome b5/NADH cytochrome b5 reductase electron transfer system supports the catalytic activity of several sterol biosynthetic enzymes. The protein is NADH-cytochrome b5 reductase 1 (CBR1) of Candida glabrata (strain ATCC 2001 / BCRC 20586 / JCM 3761 / NBRC 0622 / NRRL Y-65 / CBS 138) (Yeast).